The primary structure comprises 46 residues: Photosystem II reaction center protein K (46 aa).

Residues 1-9 constitute a propeptide that is removed on maturation; sequence MTTLALVLA. A helical membrane pass occupies residues 18–38; sequence FAPIVDVLPVIPVFFILLAFV.

It belongs to the PsbK family. In terms of assembly, PSII is composed of 1 copy each of membrane proteins PsbA, PsbB, PsbC, PsbD, PsbE, PsbF, PsbH, PsbI, PsbJ, PsbK, PsbL, PsbM, PsbT, PsbX, PsbY, PsbZ, Psb30/Ycf12, at least 3 peripheral proteins of the oxygen-evolving complex and a large number of cofactors. It forms dimeric complexes. This protein is tightly associated with CP43 (psbC), one of the core proteins.

Its subcellular location is the plastid. The protein resides in the chloroplast thylakoid membrane. Its function is as follows. One of the components of the core complex of photosystem II (PSII). PSII is a light-driven water:plastoquinone oxidoreductase that uses light energy to abstract electrons from H(2)O, generating O(2) and a proton gradient subsequently used for ATP formation. It consists of a core antenna complex that captures photons, and an electron transfer chain that converts photonic excitation into a charge separation. Required for assembly and/or stability of PSII. The protein is Photosystem II reaction center protein K of Chlamydomonas reinhardtii (Chlamydomonas smithii).